Reading from the N-terminus, the 95-residue chain is Aspartyl/glutamyl-tRNA(Asn/Gln) amidotransferase subunit C (95 aa).

Belongs to the GatC family. As to quaternary structure, heterotrimer of A, B and C subunits.

The catalysed reaction is L-glutamyl-tRNA(Gln) + L-glutamine + ATP + H2O = L-glutaminyl-tRNA(Gln) + L-glutamate + ADP + phosphate + H(+). It carries out the reaction L-aspartyl-tRNA(Asn) + L-glutamine + ATP + H2O = L-asparaginyl-tRNA(Asn) + L-glutamate + ADP + phosphate + 2 H(+). Allows the formation of correctly charged Asn-tRNA(Asn) or Gln-tRNA(Gln) through the transamidation of misacylated Asp-tRNA(Asn) or Glu-tRNA(Gln) in organisms which lack either or both of asparaginyl-tRNA or glutaminyl-tRNA synthetases. The reaction takes place in the presence of glutamine and ATP through an activated phospho-Asp-tRNA(Asn) or phospho-Glu-tRNA(Gln). This is Aspartyl/glutamyl-tRNA(Asn/Gln) amidotransferase subunit C from Methylobacterium nodulans (strain LMG 21967 / CNCM I-2342 / ORS 2060).